Consider the following 400-residue polypeptide: Elongation factor Tu (400 aa).

The region spanning 10–209 (KPHVNIGTIG…AVDKYIPTPQ (200 aa)) is the tr-type G domain. Positions 19–26 (GHVDHGKT) are G1. 19-26 (GHVDHGKT) is a binding site for GTP. Residue Thr-26 participates in Mg(2+) binding. The segment at 60–64 (GITIN) is G2. Residues 81–84 (DCPG) form a G3 region. Residues 81–85 (DCPGH) and 136–139 (NKVD) each bind GTP. The interval 136–139 (NKVD) is G4. The G5 stretch occupies residues 174-176 (SAL).

It belongs to the TRAFAC class translation factor GTPase superfamily. Classic translation factor GTPase family. EF-Tu/EF-1A subfamily. Monomer.

The protein resides in the cytoplasm. It catalyses the reaction GTP + H2O = GDP + phosphate + H(+). Functionally, GTP hydrolase that promotes the GTP-dependent binding of aminoacyl-tRNA to the A-site of ribosomes during protein biosynthesis. This is Elongation factor Tu from Caldicellulosiruptor bescii (strain ATCC BAA-1888 / DSM 6725 / KCTC 15123 / Z-1320) (Anaerocellum thermophilum).